Consider the following 300-residue polypeptide: ATP-dependent (S)-NAD(P)H-hydrate dehydratase (300 aa).

The region spanning 14-293 (LLTLFKTIVP…NEISAVFRSD (280 aa)) is the YjeF C-terminal domain. Residues Gly-114 and 167–173 (NAMEFRR) contribute to the (6S)-NADPHX site. ATP is bound by residues 198–202 (KGVND) and 219–228 (GSGRRCGGQG). (6S)-NADPHX is bound at residue Asp-229.

Belongs to the NnrD/CARKD family. It depends on Mg(2+) as a cofactor.

It catalyses the reaction (6S)-NADHX + ATP = ADP + phosphate + NADH + H(+). It carries out the reaction (6S)-NADPHX + ATP = ADP + phosphate + NADPH + H(+). In terms of biological role, catalyzes the dehydration of the S-form of NAD(P)HX at the expense of ATP, which is converted to ADP. Together with NAD(P)HX epimerase, which catalyzes the epimerization of the S- and R-forms, the enzyme allows the repair of both epimers of NAD(P)HX, a damaged form of NAD(P)H that is a result of enzymatic or heat-dependent hydration. This is ATP-dependent (S)-NAD(P)H-hydrate dehydratase from Drosophila pseudoobscura pseudoobscura (Fruit fly).